Here is a 357-residue protein sequence, read N- to C-terminus: DNA integrity scanning protein DisA (357 aa).

Residues 8–146 enclose the DAC domain; sequence VKSMINILQL…GNLRYTLKDI (139 aa). ATP-binding positions include Gly-75, Leu-93, and 106 to 110; that span reads MRHRT.

Belongs to the DisA family. As to quaternary structure, homooctamer. It depends on Mg(2+) as a cofactor.

The catalysed reaction is 2 ATP = 3',3'-c-di-AMP + 2 diphosphate. Functionally, participates in a DNA-damage check-point that is active prior to asymmetric division when DNA is damaged. DisA forms globular foci that rapidly scan along the chromosomes during sporulation, searching for lesions. When a lesion is present, DisA pauses at the lesion site. This triggers a cellular response that culminates in a temporary block in sporulation initiation. Its function is as follows. Also has diadenylate cyclase activity, catalyzing the condensation of 2 ATP molecules into cyclic di-AMP (c-di-AMP). c-di-AMP acts as a signaling molecule that couples DNA integrity with progression of sporulation. The rise in c-di-AMP level generated by DisA while scanning the chromosome, operates as a positive signal that advances sporulation; upon encountering a lesion, the DisA focus arrests at the damaged site and halts c-di-AMP synthesis. This Bacillus anthracis (strain CDC 684 / NRRL 3495) protein is DNA integrity scanning protein DisA.